We begin with the raw amino-acid sequence, 760 residues long: Catalase-peroxidase (760 aa).

Residues 1 to 24 (MAESKCPFKSQGSRSNVAGGGTRN) are disordered. Residues 96 to 242 (WHSAGTYRVF…LAAAHMGLIY (147 aa)) constitute a cross-link (tryptophyl-tyrosyl-methioninium (Trp-Tyr) (with M-268)). The Proton acceptor role is filled by H97. A cross-link (tryptophyl-tyrosyl-methioninium (Tyr-Met) (with W-96)) is located at residues 242–268 (YVNPEGPDGNPDPVAAAHDIRVTFGRM). Position 283 (H283) interacts with heme b.

This sequence belongs to the peroxidase family. Peroxidase/catalase subfamily. As to quaternary structure, homodimer or homotetramer. The cofactor is heme b. Post-translationally, formation of the three residue Trp-Tyr-Met cross-link is important for the catalase, but not the peroxidase activity of the enzyme.

It localises to the cytoplasm. It catalyses the reaction H2O2 + AH2 = A + 2 H2O. It carries out the reaction 2 H2O2 = O2 + 2 H2O. Functionally, bifunctional enzyme with both catalase and broad-spectrum peroxidase activity. This chain is Catalase-peroxidase, found in Aspergillus clavatus (strain ATCC 1007 / CBS 513.65 / DSM 816 / NCTC 3887 / NRRL 1 / QM 1276 / 107).